A 371-amino-acid polypeptide reads, in one-letter code: Maltose/maltodextrin import ATP-binding protein MalK (371 aa).

One can recognise an ABC transporter domain in the interval 4–234 (VQLQNVTKAW…PADRFVAGFI (231 aa)). 36 to 43 (GPSGCGKS) is a binding site for ATP.

This sequence belongs to the ABC transporter superfamily. Maltooligosaccharide importer (TC 3.A.1.1.1) family. In terms of assembly, the complex is composed of two ATP-binding proteins (MalK), two transmembrane proteins (MalG and MalK) and a solute-binding protein (MalE).

Its subcellular location is the cell inner membrane. It carries out the reaction D-maltose(out) + ATP + H2O = D-maltose(in) + ADP + phosphate + H(+). Functionally, part of the ABC transporter complex MalEFGK involved in maltose/maltodextrin import. Responsible for energy coupling to the transport system. This Escherichia coli O6:H1 (strain CFT073 / ATCC 700928 / UPEC) protein is Maltose/maltodextrin import ATP-binding protein MalK.